Reading from the N-terminus, the 635-residue chain is Threonine--tRNA ligase (635 aa).

The region spanning 1–61 (MINISLSDGS…ENNCKLRILT (61 aa)) is the TGS domain. Residues 242–533 (DHRKLGRELD…LIEEYAGCFP (292 aa)) are catalytic. Positions 333, 384, and 510 each coordinate Zn(2+).

This sequence belongs to the class-II aminoacyl-tRNA synthetase family. Homodimer. The cofactor is Zn(2+).

It localises to the cytoplasm. It carries out the reaction tRNA(Thr) + L-threonine + ATP = L-threonyl-tRNA(Thr) + AMP + diphosphate + H(+). Functionally, catalyzes the attachment of threonine to tRNA(Thr) in a two-step reaction: L-threonine is first activated by ATP to form Thr-AMP and then transferred to the acceptor end of tRNA(Thr). Also edits incorrectly charged L-seryl-tRNA(Thr). The sequence is that of Threonine--tRNA ligase from Rickettsia canadensis (strain McKiel).